Consider the following 297-residue polypeptide: Transmembrane protein 178A (297 aa).

The first 25 residues, 1 to 25 (MEPRALVTALSLGLSLCSLGLLVTA), serve as a signal peptide directing secretion. Residues 26–179 (IFTDHWYETD…LLHLRRITAG (154 aa)) lie on the Extracellular side of the membrane. Basic and acidic residues predominate over residues 41–57 (ESCERSRAGADPPDQKN). A disordered region spans residues 41–84 (ESCERSRAGADPPDQKNRLMPLSHLPLRDSPPLGRRLLPGGPGR). Residues 68-79 (RDSPPLGRRLLP) are compositionally biased toward low complexity. Asn158 is a glycosylation site (N-linked (GlcNAc...) asparagine). A helical membrane pass occupies residues 180 to 200 (FLGMAVAVLLCGCIVATVSFF). The Cytoplasmic portion of the chain corresponds to 201 to 208 (WEESLTQH). The chain crosses the membrane as a helical span at residues 209-229 (VAGLLFLMTGIFCTISLCTYA). Topologically, residues 230 to 257 (ASISYDLNRLPKLIYSLPADVEHGYSWS) are extracellular. The chain crosses the membrane as a helical span at residues 258-278 (IFCAWCSLGFIVAAGGLCIAY). At 279–297 (PFISRTKIAQLKSGRDSTV) the chain is on the cytoplasmic side.

This sequence belongs to the TMEM178 family. Interacts with STIM1.

It is found in the endoplasmic reticulum membrane. Its function is as follows. Acts as a negative regulator of osteoclast differentiation in basal and inflammatory conditions by regulating TNFSF11-induced Ca (2+) fluxes, thereby controlling the induction of NFATC1. This is Transmembrane protein 178A (TMEM178A) from Homo sapiens (Human).